Reading from the N-terminus, the 161-residue chain is uncharacterized protein (161 aa).

A helical transmembrane segment spans residues 76–94 (ISISSQCIFNVVILSFVFT).

Its subcellular location is the membrane. This is an uncharacterized protein from Saccharomyces cerevisiae (strain ATCC 204508 / S288c) (Baker's yeast).